Reading from the N-terminus, the 382-residue chain is MIASTGKTNLLGLTQQEMEKFFDSIGEKRFRAGQVMKWIHHFGVDDFDAMTNVSKALREKLKACAEVRGPEVVSEDISSDGTRKWVVRVESGSCVETVYIPQGKRGTLCVSSQAGCALDCSFCSTGKQGFNSNLTAAEVIGQVWIANKSFGSVPATVDRAITNVVMMGMGEPLLNFDNVIAAMHLMMDDLGYGISKRRVTLSTSGVVPMIDELSKHIDVSLALSLHAPNDALRNQLVPLNKKYPLKVLLESCRRYMSSLGEKRVLTIEYTMLKDINDKVEHAVEMIELLKDTPCKINLIPFNPFPHSGYERPSNNAIRRFQDLLHQAGYNVTVRTTRGEDIDAACGQLVGQVMDRTRRSERYIAVRELSADVDTAPAAATRT.

Glu96 acts as the Proton acceptor in catalysis. Residues 102-342 (QGKRGTLCVS…VRTTRGEDID (241 aa)) form the Radical SAM core domain. Cys109 and Cys345 are disulfide-bonded. [4Fe-4S] cluster-binding residues include Cys116, Cys120, and Cys123. S-adenosyl-L-methionine-binding positions include 170 to 171 (GE), Ser202, 224 to 226 (SLH), and Asn302. Residue Cys345 is the S-methylcysteine intermediate of the active site.

This sequence belongs to the radical SAM superfamily. RlmN family. The cofactor is [4Fe-4S] cluster.

The protein localises to the cytoplasm. It carries out the reaction adenosine(2503) in 23S rRNA + 2 reduced [2Fe-2S]-[ferredoxin] + 2 S-adenosyl-L-methionine = 2-methyladenosine(2503) in 23S rRNA + 5'-deoxyadenosine + L-methionine + 2 oxidized [2Fe-2S]-[ferredoxin] + S-adenosyl-L-homocysteine. The catalysed reaction is adenosine(37) in tRNA + 2 reduced [2Fe-2S]-[ferredoxin] + 2 S-adenosyl-L-methionine = 2-methyladenosine(37) in tRNA + 5'-deoxyadenosine + L-methionine + 2 oxidized [2Fe-2S]-[ferredoxin] + S-adenosyl-L-homocysteine. Specifically methylates position 2 of adenine 2503 in 23S rRNA and position 2 of adenine 37 in tRNAs. m2A2503 modification seems to play a crucial role in the proofreading step occurring at the peptidyl transferase center and thus would serve to optimize ribosomal fidelity. The chain is Dual-specificity RNA methyltransferase RlmN from Pseudomonas syringae pv. tomato (strain ATCC BAA-871 / DC3000).